We begin with the raw amino-acid sequence, 194 residues long: CASP-like protein 2C1 (194 aa).

Residues 1 to 18 (MSSYMEAAAAARAAEAKT) are Cytoplasmic-facing. Residues 19-39 (EGLLRGACALLAAAAALLVGL) traverse the membrane as a helical segment. The Extracellular portion of the chain corresponds to 40–59 (NTQTETVLFIRKKATVKDVQ). A helical transmembrane segment spans residues 60 to 80 (ALWVLAMAAAAAAGYHLLQLL). Over 81 to 109 (RCFYLSRFADGKPCRHRRAIAWLCFLLDK) the chain is Cytoplasmic. A helical transmembrane segment spans residues 110-130 (GCAYITFATTVAAAQACVVAL). Residues 131–151 (YGTHALQWTKLCNIYTRFCEQ) are Extracellular-facing. The chain crosses the membrane as a helical span at residues 152 to 172 (VAGSLVCAMLAAVGTALLSVV). At 173–194 (SARNLFRLYPSMLSPPPSSFVG) the chain is on the cytoplasmic side.

The protein belongs to the Casparian strip membrane proteins (CASP) family. As to quaternary structure, homodimer and heterodimers.

It is found in the cell membrane. The polypeptide is CASP-like protein 2C1 (Oryza sativa subsp. japonica (Rice)).